The following is a 158-amino-acid chain: Large ribosomal subunit protein uL15 (158 aa).

Basic and acidic residues predominate over residues 1–13 (MKLNEIKDNEGST). Residues 1 to 45 (MKLNEIKDNEGSTHSRKRLGRGIGSGSGKTGGRGVKGQKSRSGVA) are disordered. A compositionally biased stretch (gly residues) spans 21-35 (RGIGSGSGKTGGRGV).

Belongs to the universal ribosomal protein uL15 family. Part of the 50S ribosomal subunit.

Its function is as follows. Binds to the 23S rRNA. The sequence is that of Large ribosomal subunit protein uL15 from Rhizobium etli (strain CIAT 652).